The following is a 501-amino-acid chain: Monocarboxylate transporter 1 (501 aa).

At 1-22 (MPPAVGGPVGYTPPDGGWGWAV) the chain is on the cytoplasmic side. Residues 23–44 (VIGAFISIGFSYAFPKSITVFF) form a helical membrane-spanning segment. K38 contributes to the (S)-lactate binding site. Residues 45–55 (KEIEGIFNATT) are Extracellular-facing. The chain crosses the membrane as a helical span at residues 56-80 (SEVSWISSIMLAVMYGGGPISSVLV). Topologically, residues 81–84 (NKYG) are cytoplasmic. The helical transmembrane segment at 85 to 105 (SRPVMIVGGILSGSGLIAASF) threads the bilayer. Over 106–109 (CNTV) the chain is Extracellular. Residues 110-132 (QELYFSVGVIGGLGLAFNLNPAL) traverse the membrane as a helical segment. At 133–146 (TMIGKYFYKRRPLA) the chain is on the cytoplasmic side. Residues 147–169 (NGLAMAGSPVFLSTLAPLNQAFF) form a helical membrane-spanning segment. At 170–174 (MIYGW) the chain is on the extracellular side. Residues 175-194 (RGSFLILGGLLLNCCVAGAL) traverse the membrane as a helical segment. The Cytoplasmic portion of the chain corresponds to 195–261 (MRPIGPKPTT…FLDLSLFKHR (67 aa)). The tract at residues 201 to 236 (KPTTAEKEKSKGSLQEAGKYETKKGASDANTDLIGG) is disordered. S210, S213, and S227 each carry phosphoserine. Residue T231 is modified to Phosphothreonine. Residues 262–288 (GFLLYLSGNVLMFFGLFTPLVFLSNYG) traverse the membrane as a helical segment. The Extracellular portion of the chain corresponds to 289–295 (KSKHYSS). Residues 296–317 (EKAAFLLSILAFVDMVARPSMG) form a helical membrane-spanning segment. D309 contributes to the H(+) binding site. R313 serves as a coordination point for (S)-lactate. Residues 318–328 (LVANTKWVRPR) are Cytoplasmic-facing. A helical membrane pass occupies residues 329–349 (VQYFFAASIIANGLCHLAAPL). Over 350-353 (SSTY) the chain is Extracellular. The chain crosses the membrane as a helical span at residues 354 to 375 (IELCIYAGFFGFAFGWLSSVLF). The Cytoplasmic segment spans residues 376-389 (ETLMDLVGPQRFSS). Residues 390–410 (AVGLVTIVECCPVLLGPPVLG) traverse the membrane as a helical segment. At 411–421 (RLNDIYGDYKY) the chain is on the extracellular side. The chain crosses the membrane as a helical span at residues 422–443 (TYWACGIILIVAGIYLFIGMGI). Topologically, residues 444-501 (NYRLLEKEQKAEKQQKKESKDEETNVDVAEKPKEVIDAAESPEHKATEEDPKEAESPV) are cytoplasmic. A disordered region spans residues 454-501 (AEKQQKKESKDEETNVDVAEKPKEVIDAAESPEHKATEEDPKEAESPV). S462 carries the phosphoserine modification. T467 bears the Phosphothreonine mark. Residues S484 and S499 each carry the phosphoserine modification.

Belongs to the major facilitator superfamily. Monocarboxylate porter (TC 2.A.1.13) family. In terms of assembly, interacts with BSG; interaction mediates SLC16A1 targeting to the plasma membrane. Interacts with EMB; interaction mediates SLC16A1 targeting to the plasma membrane.

The protein localises to the cell membrane. It localises to the basolateral cell membrane. The protein resides in the apical cell membrane. The catalysed reaction is (S)-lactate(in) + H(+)(in) = (S)-lactate(out) + H(+)(out). The enzyme catalyses acetate(out) + H(+)(out) = acetate(in) + H(+)(in). It carries out the reaction acetoacetate(out) + H(+)(out) = acetoacetate(in) + H(+)(in). It catalyses the reaction pyruvate(out) + H(+)(out) = pyruvate(in) + H(+)(in). The catalysed reaction is (R)-3-hydroxybutanoate(out) + H(+)(out) = (R)-3-hydroxybutanoate(in) + H(+)(in). The enzyme catalyses 3-methyl-2-oxobutanoate(out) + H(+)(out) = 3-methyl-2-oxobutanoate(in) + H(+)(in). It carries out the reaction 4-methyl-2-oxopentanoate(out) + H(+)(out) = 4-methyl-2-oxopentanoate(in) + H(+)(in). It catalyses the reaction succinate(in) + 2 H(+)(in) = succinate(out) + 2 H(+)(out). Bidirectional proton-coupled monocarboxylate transporter. Catalyzes the rapid transport across the plasma membrane of many monocarboxylates such as lactate, pyruvate, acetate and the ketone bodies acetoacetate and beta-hydroxybutyrate, and thus contributes to the maintenance of intracellular pH. The transport direction is determined by the proton motive force and the concentration gradient of the substrate monocarboxylate. MCT1 is a major lactate exporter. Plays a role in cellular responses to a high-fat diet by modulating the cellular levels of lactate and pyruvate that contribute to the regulation of central metabolic pathways and insulin secretion, with concomitant effects on plasma insulin levels and blood glucose homeostasis. Facilitates the protonated monocarboxylate form of succinate export, that its transient protonation upon muscle cell acidification in exercising muscle and ischemic heart. Functions via alternate outward- and inward-open conformation states. Protonation and deprotonation of 309-Asp is essential for the conformational transition. This is Monocarboxylate transporter 1 (SLC16A1) from Bos taurus (Bovine).